Here is a 364-residue protein sequence, read N- to C-terminus: tRNA(Met) cytidine acetate ligase (364 aa).

Residues Ile-7–Leu-20, Gly-96, Asn-152, and Arg-175 each bind ATP.

This sequence belongs to the TmcAL family.

The protein localises to the cytoplasm. The enzyme catalyses cytidine(34) in elongator tRNA(Met) + acetate + ATP = N(4)-acetylcytidine(34) in elongator tRNA(Met) + AMP + diphosphate. Functionally, catalyzes the formation of N(4)-acetylcytidine (ac(4)C) at the wobble position of elongator tRNA(Met), using acetate and ATP as substrates. First activates an acetate ion to form acetyladenylate (Ac-AMP) and then transfers the acetyl group to tRNA to form ac(4)C34. This Streptococcus sanguinis (strain SK36) protein is tRNA(Met) cytidine acetate ligase.